Reading from the N-terminus, the 283-residue chain is Methyltransferase cpsF (283 aa).

Belongs to the methyltransferase superfamily. LaeA methyltransferase family.

It carries out the reaction campesine A + S-adenosyl-L-methionine = campesine B + S-adenosyl-L-homocysteine + H(+). It functions in the pathway alkaloid biosynthesis. In terms of biological role, methyltransferase; part of the gene cluster that mediates the biosynthesis of campesine G, a dimeric indole piperazine alkaloid that shows good insecticidal activity Galleria mellonella. Within the pathway, cpsF methylates campesine A at N13 of piperazine ring to produce campesine B. The non-canonical non-ribosomal peptide synthetase cpsA catalyzes the first steps of the pathway by producing L-tryptophanal and L-valinal from their respective amino-acids. These products condensate spontaneously to form trypyl-valyl pyrazine also known as didehydrocampesine A. The NmrA-like family domain-containing oxidoreductase cpsB is the next enzyme in cps pathway and reduces the unstable didehydrocampesine A to campesine A. The methyltransferase cpsF and the acetyltransferase cpsE both recognize N13 of piperazine ring to carry out methylation and acetylation of campesine A to produce campesine C and B, respectively. The cytochrome P450 monooxygenase cpsD then acts as a dimerase that catalyzes oxidative heterocoupling between campesine B and C to produce heterodimers with unexpected 6/5/6/6/6/6/5/6 eight-ring scaffold called campesine D. Finally,the cytochrome P450 monooxygenase cpsC is a regioselective dehydrogenase that catalyzes dehydrogenation reaction towards C2-N1 to produce campesine G. The protein is Methyltransferase cpsF of Aspergillus campestris (strain IBT 28561).